Consider the following 387-residue polypeptide: Phosphoglycerate kinase (387 aa).

Substrate contacts are provided by residues 21–23 (DLN), Arg36, 59–62 (HLGR), Arg113, and Arg146. ATP contacts are provided by residues Lys197, Glu314, and 340-343 (GGDT).

This sequence belongs to the phosphoglycerate kinase family. As to quaternary structure, monomer.

It is found in the cytoplasm. The catalysed reaction is (2R)-3-phosphoglycerate + ATP = (2R)-3-phospho-glyceroyl phosphate + ADP. Its pathway is carbohydrate degradation; glycolysis; pyruvate from D-glyceraldehyde 3-phosphate: step 2/5. The polypeptide is Phosphoglycerate kinase (Marinomonas sp. (strain MWYL1)).